A 469-amino-acid chain; its full sequence is Probable Xaa-Pro aminopeptidase PEPP (469 aa).

Residues D257, D268, E391, and E436 each contribute to the Mn(2+) site.

Belongs to the peptidase M24B family. Mn(2+) is required as a cofactor.

The enzyme catalyses Release of any N-terminal amino acid, including proline, that is linked to proline, even from a dipeptide or tripeptide.. Catalyzes the removal of a penultimate prolyl residue from the N-termini of peptides. The sequence is that of Probable Xaa-Pro aminopeptidase PEPP (PEPP) from Fusarium vanettenii (strain ATCC MYA-4622 / CBS 123669 / FGSC 9596 / NRRL 45880 / 77-13-4) (Fusarium solani subsp. pisi).